We begin with the raw amino-acid sequence, 137 residues long: MAVEQDIFDAVVMADERFHGEGYQEGYEEGSSLGIVEGKRYGMVHGAKIGSEIGCYRGFALAWKCLLHSGAGEKDSRKMKVVEALIALLQDFPYDDPTYEKLHEDLDRIRGKFRQLCSLLNVQPDFKVTPGGSGLAF.

Alanine 2 carries the N-acetylalanine modification. Positions 22 to 58 (GYQEGYEEGSSLGIVEGKRYGMVHGAKIGSEIGCYRG) are deca-GX3 motif; required for interaction with YAE1 and the CIA complex.

It belongs to the LTO1 family. In terms of assembly, forms a complex with YAE1. Interacts with PYCR1 and PYCR2.

It localises to the nucleus. In terms of biological role, the complex LTO1:YAE1 functions as a target specific adapter that probably recruits apo-ABCE1 to the cytosolic iron-sulfur protein assembly (CIA) complex machinery. May be required for biogenesis of the large ribosomal subunit and initiation of translation. May play a role in the regulation of proline metabolism and ROS production. The polypeptide is Protein LTO1 homolog (Mus musculus (Mouse)).